The chain runs to 107 residues: Integration host factor (107 aa).

The segment at 1–20 (MALPPLTPEQRAAALEKAAA) is disordered. Positions 9 to 18 (EQRAAALEKA) are enriched in low complexity. Lys54 is a binding site for DNA. The H2TH motif, binds DNA motif lies at 64 to 71 (LPGVGKVR). DNA contacts are provided by Ser82, Arg85, Arg88, Ser92, Asn93, and Gln94. Residues 82 to 94 (SESRRVRGLGSNQ) are lid, binds DNA.

The protein belongs to the actinobacterial IHF (aIHF) family. As to quaternary structure, monomer.

The protein localises to the cytoplasm. It localises to the spore. Its subcellular location is the nucleoid. In terms of biological role, a nucleoid-associated protein (NAP) that probably plays a role in chromosome compactation. Contributes to development and secondary metabolism, but is dispensable for growth and viability. Binds to the promoter region of a number of genes (including itself); multiple molecules of the protein bind to the DNA simultaneously, deletion alters the expression of about 30 genes (both up- and down-regulation occurs). Plays a role in controlling viability. Binds dsDNA without any obvious sequence specificity, in a concentration and length-dependent manner. Promotes supercoiling in a topoisomerase-dependent manner (counteracts TopA plasmid relaxation). Binds DNA as a monomer, contacting 8 base pairs via the phosphate backbone; each monomer can bind 2 DNA duplexes, allowing a bridging function. Alters DNA topology, constraining negative supercoils, possibly by DNA twist. Longer dsDNA binds more than one sIHF subunit. The sequence is that of Integration host factor from Streptomyces coelicolor (strain ATCC BAA-471 / A3(2) / M145).